The sequence spans 389 residues: 11-beta-hydroxysteroid dehydrogenase-like 5 (389 aa).

A helical; Signal-anchor for type II membrane protein membrane pass occupies residues 11–31 (LVAPPATMVVMAFAWPLLSFI). NADP(+) contacts are provided by residues 56–82 (GASS…VARR) and aspartate 107. Substrate is bound at residue serine 186. The Proton acceptor role is filled by tyrosine 199. NADP(+) is bound by residues 199–203 (YSAAK) and lysine 203. Residues 337-381 (LMLEGGPPRVPASPPRYTASPPHYTASPPRYPASPPRYPASPPRF) are disordered. A compositionally biased stretch (pro residues) spans 365-378 (PRYPASPPRYPASP).

The protein belongs to the short-chain dehydrogenases/reductases (SDR) family.

Its subcellular location is the membrane. This is 11-beta-hydroxysteroid dehydrogenase-like 5 (HSD5) from Arabidopsis thaliana (Mouse-ear cress).